Consider the following 926-residue polypeptide: Serine/threonine-protein kinase pakE (926 aa).

Residues 36–55 (SSRELPTQDSSTKTSNITTP) show a composition bias toward polar residues. 2 disordered regions span residues 36 to 257 (SSRE…RPKL) and 546 to 576 (QLNN…TTTT). Positions 56–107 (NNNNNNNNNNNNNNNNNNNNNNNNNNNNNNNNNNNNNNNNNNNNNNNNNNNN) are enriched in low complexity. Residues 108 to 117 (TPTSLNSSWK) are compositionally biased toward polar residues. Residues 134 to 173 (NNNNNVGSPNNQSTSQTNHQQPPPQQLQQQQSLSSTSTPS) are compositionally biased toward low complexity. Positions 183-204 (RRNVTSPNLTRSDPTVPITNSR) are enriched in polar residues. The segment covering 215 to 253 (PQFQLNNLNFDDNNDHSTTTTNNNNNNNNNNSNNNNNNN) has biased composition (low complexity). Positions 534-567 (LDFEKELKENQQQLNNNNNNNNNNNNNNNNNNNN) form a coiled coil. The Protein kinase domain maps to 650–903 (FEFKEKLGQG…VIDLLSHDFI (254 aa)). Residues 656–664 (LGQGGYGAV) and lysine 679 contribute to the ATP site. Residue aspartate 771 is the Proton acceptor of the active site.

The protein belongs to the protein kinase superfamily. STE Ser/Thr protein kinase family. STE20 subfamily. The cofactor is Mg(2+).

The catalysed reaction is L-seryl-[protein] + ATP = O-phospho-L-seryl-[protein] + ADP + H(+). The enzyme catalyses L-threonyl-[protein] + ATP = O-phospho-L-threonyl-[protein] + ADP + H(+). May play a role in responding to changes in chemoattractant levels. The chain is Serine/threonine-protein kinase pakE from Dictyostelium discoideum (Social amoeba).